Reading from the N-terminus, the 401-residue chain is Argininosuccinate synthase (401 aa).

8–16 (AYSGGLDTS) serves as a coordination point for ATP. L-citrulline-binding residues include Tyr-86 and Ser-91. Gly-116 is an ATP binding site. Thr-118, Asn-122, and Asp-123 together coordinate L-aspartate. Residue Asn-122 coordinates L-citrulline. The L-citrulline site is built by Arg-126, Ser-175, Ser-184, Glu-260, and Tyr-272.

Belongs to the argininosuccinate synthase family. Type 1 subfamily. In terms of assembly, homotetramer.

It localises to the cytoplasm. It carries out the reaction L-citrulline + L-aspartate + ATP = 2-(N(omega)-L-arginino)succinate + AMP + diphosphate + H(+). Its pathway is amino-acid biosynthesis; L-arginine biosynthesis; L-arginine from L-ornithine and carbamoyl phosphate: step 2/3. The protein is Argininosuccinate synthase of Clostridium kluyveri (strain ATCC 8527 / DSM 555 / NBRC 12016 / NCIMB 10680 / K1).